The chain runs to 86 residues: Small ribosomal subunit protein uS15 (86 aa).

The protein belongs to the universal ribosomal protein uS15 family. As to quaternary structure, part of the 30S ribosomal subunit. Forms a bridge to the 50S subunit in the 70S ribosome, contacting the 23S rRNA.

Functionally, one of the primary rRNA binding proteins, it binds directly to 16S rRNA where it helps nucleate assembly of the platform of the 30S subunit by binding and bridging several RNA helices of the 16S rRNA. Forms an intersubunit bridge (bridge B4) with the 23S rRNA of the 50S subunit in the ribosome. This Ruthia magnifica subsp. Calyptogena magnifica protein is Small ribosomal subunit protein uS15.